Consider the following 465-residue polypeptide: Cysteine--tRNA ligase (465 aa).

Cysteine 27 lines the Zn(2+) pocket. Positions 29–39 (PTVYDDAHLGH) match the 'HIGH' region motif. Zn(2+) contacts are provided by cysteine 207, histidine 237, and glutamate 241. The 'KMSKS' region motif lies at 269–273 (KMSKS). Residue lysine 272 coordinates ATP.

The protein belongs to the class-I aminoacyl-tRNA synthetase family. As to quaternary structure, monomer. The cofactor is Zn(2+).

It is found in the cytoplasm. The catalysed reaction is tRNA(Cys) + L-cysteine + ATP = L-cysteinyl-tRNA(Cys) + AMP + diphosphate. The sequence is that of Cysteine--tRNA ligase from Helicobacter pylori (strain G27).